Reading from the N-terminus, the 211-residue chain is Pyridoxine/pyridoxamine 5'-phosphate oxidase (211 aa).

Substrate is bound by residues 8–11 and K66; that span reads RNEY. FMN contacts are provided by residues 61 to 66, 76 to 77, K83, and Q105; these read RVVLLK and FT. 3 residues coordinate substrate: Y123, R127, and S131. FMN-binding positions include 140–141 and W184; that span reads QS. A substrate-binding site is contributed by 190-192; the sequence is RLH. An FMN-binding site is contributed by R194.

Belongs to the pyridoxamine 5'-phosphate oxidase family. In terms of assembly, homodimer. FMN is required as a cofactor.

It carries out the reaction pyridoxamine 5'-phosphate + O2 + H2O = pyridoxal 5'-phosphate + H2O2 + NH4(+). The catalysed reaction is pyridoxine 5'-phosphate + O2 = pyridoxal 5'-phosphate + H2O2. It functions in the pathway cofactor metabolism; pyridoxal 5'-phosphate salvage; pyridoxal 5'-phosphate from pyridoxamine 5'-phosphate: step 1/1. Its pathway is cofactor metabolism; pyridoxal 5'-phosphate salvage; pyridoxal 5'-phosphate from pyridoxine 5'-phosphate: step 1/1. Functionally, catalyzes the oxidation of either pyridoxine 5'-phosphate (PNP) or pyridoxamine 5'-phosphate (PMP) into pyridoxal 5'-phosphate (PLP). This Mannheimia succiniciproducens (strain KCTC 0769BP / MBEL55E) protein is Pyridoxine/pyridoxamine 5'-phosphate oxidase.